Reading from the N-terminus, the 314-residue chain is Homoserine O-acetyltransferase (314 aa).

Catalysis depends on Cys-142, which acts as the Acyl-thioester intermediate. Substrate is bound by residues Lys-163 and Ser-192. His-235 serves as the catalytic Proton acceptor. Glu-237 is an active-site residue. Substrate is bound at residue Arg-249.

It belongs to the MetA family.

The protein resides in the cytoplasm. The catalysed reaction is L-homoserine + acetyl-CoA = O-acetyl-L-homoserine + CoA. It participates in amino-acid biosynthesis; L-methionine biosynthesis via de novo pathway; O-acetyl-L-homoserine from L-homoserine: step 1/1. Transfers an acetyl group from acetyl-CoA to L-homoserine, forming acetyl-L-homoserine. The polypeptide is Homoserine O-acetyltransferase (Desulfovibrio desulfuricans (strain ATCC 27774 / DSM 6949 / MB)).